A 759-amino-acid chain; its full sequence is DNA replication licensing factor mcm-5 (759 aa).

Positions 330-536 constitute an MCM domain; sequence AYELIAKSIA…KDATLAKHVI (207 aa). Position 370 (Arg-370) interacts with ADP. An Arginine finger motif is present at residues 511–514; the sequence is SRFD.

This sequence belongs to the MCM family. In terms of assembly, component of the mcm2-7 complex. The complex forms a toroidal hexameric ring with the proposed subunit order mcm2-mcm6-mcm4-mcm7-mcm3-mcm5 (By simililarity).

Its subcellular location is the nucleus. The protein localises to the cytoplasm. It localises to the cytosol. It catalyses the reaction ATP + H2O = ADP + phosphate + H(+). Functionally, acts as a component of the MCM2-7 complex (MCM complex) which is the replicative helicase essential for 'once per cell cycle' DNA replication initiation and elongation in eukaryotic cells. Core component of CDC45-MCM-GINS (CMG) helicase, the molecular machine that unwinds template DNA during replication, and around which the replisome is built. The active ATPase sites in the MCM2-7 ring are formed through the interaction surfaces of two neighboring subunits such that a critical structure of a conserved arginine finger motif is provided in trans relative to the ATP-binding site of the Walker A box of the adjacent subunit. The six ATPase active sites, however, are likely to contribute differentially to the complex helicase activity. This chain is DNA replication licensing factor mcm-5 (mcm-5), found in Caenorhabditis elegans.